We begin with the raw amino-acid sequence, 277 residues long: 4-hydroxy-tetrahydrodipicolinate reductase (277 aa).

Residues 11-16 (GALGRM) and 110-112 (GTT) each bind NAD(+). H166 functions as the Proton donor/acceptor in the catalytic mechanism. H167 lines the (S)-2,3,4,5-tetrahydrodipicolinate pocket. The Proton donor role is filled by K170. 176-177 (GT) contributes to the (S)-2,3,4,5-tetrahydrodipicolinate binding site.

It belongs to the DapB family.

The protein resides in the cytoplasm. It catalyses the reaction (S)-2,3,4,5-tetrahydrodipicolinate + NAD(+) + H2O = (2S,4S)-4-hydroxy-2,3,4,5-tetrahydrodipicolinate + NADH + H(+). It carries out the reaction (S)-2,3,4,5-tetrahydrodipicolinate + NADP(+) + H2O = (2S,4S)-4-hydroxy-2,3,4,5-tetrahydrodipicolinate + NADPH + H(+). It participates in amino-acid biosynthesis; L-lysine biosynthesis via DAP pathway; (S)-tetrahydrodipicolinate from L-aspartate: step 4/4. Functionally, catalyzes the conversion of 4-hydroxy-tetrahydrodipicolinate (HTPA) to tetrahydrodipicolinate. In Synechococcus sp. (strain CC9902), this protein is 4-hydroxy-tetrahydrodipicolinate reductase.